Reading from the N-terminus, the 906-residue chain is Translation initiation factor IF-2 (906 aa).

3 disordered regions span residues 94-125, 165-232, and 270-321; these read APEK…PETA, ESEA…TGKK, and RQEQ…SSEV. Basic and acidic residues-rich tracts occupy residues 165-176, 222-232, and 270-284; these read ESEAEKGTEIEK, GPAEARETGKK, and RQEQ…KREA. A compositionally biased stretch (basic residues) spans 299–313; it reads QQRRSLKRGGKRKKY. The tr-type G domain maps to 405–574; sequence ERPPVITIMG…LLQAEMMELK (170 aa). Residues 414 to 421 form a G1 region; the sequence is GHVDHGKT. 414-421 provides a ligand contact to GTP; that stretch reads GHVDHGKT. Residues 439–443 form a G2 region; that stretch reads GITQH. Residues 460 to 463 are G3; that stretch reads DTPG. GTP is bound by residues 460-464 and 514-517; these read DTPGH and NKMD. The tract at residues 514 to 517 is G4; that stretch reads NKMD. The G5 stretch occupies residues 550-552; it reads SAH.

This sequence belongs to the TRAFAC class translation factor GTPase superfamily. Classic translation factor GTPase family. IF-2 subfamily.

The protein resides in the cytoplasm. In terms of biological role, one of the essential components for the initiation of protein synthesis. Protects formylmethionyl-tRNA from spontaneous hydrolysis and promotes its binding to the 30S ribosomal subunits. Also involved in the hydrolysis of GTP during the formation of the 70S ribosomal complex. The polypeptide is Translation initiation factor IF-2 (Sulfurovum sp. (strain NBC37-1)).